We begin with the raw amino-acid sequence, 397 residues long: Phosphoglycerate kinase (397 aa).

Substrate-binding positions include 21–23 (DVN), R36, 59–62 (HFGR), R119, and R152. Residues K202, E324, and 354 to 357 (GGDT) each bind ATP.

This sequence belongs to the phosphoglycerate kinase family. As to quaternary structure, monomer.

It localises to the cytoplasm. It catalyses the reaction (2R)-3-phosphoglycerate + ATP = (2R)-3-phospho-glyceroyl phosphate + ADP. Its pathway is carbohydrate degradation; glycolysis; pyruvate from D-glyceraldehyde 3-phosphate: step 2/5. This chain is Phosphoglycerate kinase, found in Cereibacter sphaeroides (strain KD131 / KCTC 12085) (Rhodobacter sphaeroides).